The primary structure comprises 289 residues: ATP synthase subunit a (289 aa).

6 helical membrane-spanning segments follow: residues 43 to 63 (AFHV…VLIF), 101 to 121 (SAVI…MNAV), 160 to 180 (LSVF…GGFI), 193 to 213 (IFVQ…TLIA), 232 to 252 (VFIL…GLGI), and 259 to 279 (AVFH…LTIV).

Belongs to the ATPase A chain family. In terms of assembly, F-type ATPases have 2 components, CF(1) - the catalytic core - and CF(0) - the membrane proton channel. CF(1) has five subunits: alpha(3), beta(3), gamma(1), delta(1), epsilon(1). CF(0) has three main subunits: a(1), b(2) and c(9-12). The alpha and beta chains form an alternating ring which encloses part of the gamma chain. CF(1) is attached to CF(0) by a central stalk formed by the gamma and epsilon chains, while a peripheral stalk is formed by the delta and b chains.

It is found in the cell inner membrane. In terms of biological role, key component of the proton channel; it plays a direct role in the translocation of protons across the membrane. This chain is ATP synthase subunit a, found in Pseudomonas syringae pv. tomato (strain ATCC BAA-871 / DC3000).